Consider the following 77-residue polypeptide: Exodeoxyribonuclease 7 small subunit (77 aa).

The protein belongs to the XseB family. Heterooligomer composed of large and small subunits.

It localises to the cytoplasm. The catalysed reaction is Exonucleolytic cleavage in either 5'- to 3'- or 3'- to 5'-direction to yield nucleoside 5'-phosphates.. In terms of biological role, bidirectionally degrades single-stranded DNA into large acid-insoluble oligonucleotides, which are then degraded further into small acid-soluble oligonucleotides. In Chromobacterium violaceum (strain ATCC 12472 / DSM 30191 / JCM 1249 / CCUG 213 / NBRC 12614 / NCIMB 9131 / NCTC 9757 / MK), this protein is Exodeoxyribonuclease 7 small subunit.